The primary structure comprises 380 residues: Bifunctional enzyme IspD/IspF (380 aa).

Residues methionine 1–isoleucine 224 are 2-C-methyl-D-erythritol 4-phosphate cytidylyltransferase. Residues arginine 225–glycine 380 form a 2-C-methyl-D-erythritol 2,4-cyclodiphosphate synthase region. Positions 231 and 233 each coordinate a divalent metal cation. 4-CDP-2-C-methyl-D-erythritol 2-phosphate-binding positions include aspartate 231–histidine 233 and histidine 257–serine 258. Histidine 265 is a binding site for a divalent metal cation. Residues aspartate 279–glycine 281, threonine 355–glutamate 358, phenylalanine 362, and arginine 365 each bind 4-CDP-2-C-methyl-D-erythritol 2-phosphate.

This sequence in the N-terminal section; belongs to the IspD/TarI cytidylyltransferase family. IspD subfamily. The protein in the C-terminal section; belongs to the IspF family. Requires a divalent metal cation as cofactor.

The enzyme catalyses 2-C-methyl-D-erythritol 4-phosphate + CTP + H(+) = 4-CDP-2-C-methyl-D-erythritol + diphosphate. The catalysed reaction is 4-CDP-2-C-methyl-D-erythritol 2-phosphate = 2-C-methyl-D-erythritol 2,4-cyclic diphosphate + CMP. It functions in the pathway isoprenoid biosynthesis; isopentenyl diphosphate biosynthesis via DXP pathway; isopentenyl diphosphate from 1-deoxy-D-xylulose 5-phosphate: step 2/6. It participates in isoprenoid biosynthesis; isopentenyl diphosphate biosynthesis via DXP pathway; isopentenyl diphosphate from 1-deoxy-D-xylulose 5-phosphate: step 4/6. Bifunctional enzyme that catalyzes the formation of 4-diphosphocytidyl-2-C-methyl-D-erythritol from CTP and 2-C-methyl-D-erythritol 4-phosphate (MEP) (IspD), and catalyzes the conversion of 4-diphosphocytidyl-2-C-methyl-D-erythritol 2-phosphate (CDP-ME2P) to 2-C-methyl-D-erythritol 2,4-cyclodiphosphate (ME-CPP) with a corresponding release of cytidine 5-monophosphate (CMP) (IspF). The sequence is that of Bifunctional enzyme IspD/IspF from Paracoccus denitrificans (strain Pd 1222).